A 245-amino-acid polypeptide reads, in one-letter code: Biosynthetic peptidoglycan transglycosylase (245 aa).

Residues 24–44 (LVVIGAWLAGILLFSFLPVPF) form a helical membrane-spanning segment.

It belongs to the glycosyltransferase 51 family.

It localises to the cell inner membrane. It catalyses the reaction [GlcNAc-(1-&gt;4)-Mur2Ac(oyl-L-Ala-gamma-D-Glu-L-Lys-D-Ala-D-Ala)](n)-di-trans,octa-cis-undecaprenyl diphosphate + beta-D-GlcNAc-(1-&gt;4)-Mur2Ac(oyl-L-Ala-gamma-D-Glu-L-Lys-D-Ala-D-Ala)-di-trans,octa-cis-undecaprenyl diphosphate = [GlcNAc-(1-&gt;4)-Mur2Ac(oyl-L-Ala-gamma-D-Glu-L-Lys-D-Ala-D-Ala)](n+1)-di-trans,octa-cis-undecaprenyl diphosphate + di-trans,octa-cis-undecaprenyl diphosphate + H(+). It participates in cell wall biogenesis; peptidoglycan biosynthesis. In terms of biological role, peptidoglycan polymerase that catalyzes glycan chain elongation from lipid-linked precursors. The sequence is that of Biosynthetic peptidoglycan transglycosylase from Pectobacterium atrosepticum (strain SCRI 1043 / ATCC BAA-672) (Erwinia carotovora subsp. atroseptica).